The sequence spans 1196 residues: Contactin rig-6 (1196 aa).

The signal sequence occupies residues 1 to 19 (MMMLIRCISIFLLFGFVNA). Asn100 and Asn195 each carry an N-linked (GlcNAc...) asparagine glycan. 2 consecutive Ig-like C2-type domains span residues 144–225 (PQIS…ARNS) and 232–319 (PPIL…CSLS). 2 disulfides stabilise this stretch: Cys169/Cys220 and Cys263/Cys316. Asn343 carries an N-linked (GlcNAc...) asparagine glycan. 4 consecutive Ig-like C2-type domains span residues 355–438 (PQIF…VKLR), 441–533 (PSIL…ALLT), 539–626 (PVFP…VQLI), and 631–730 (PSIK…EFVT). The cysteines at positions 372 and 420 are disulfide-linked. An N-linked (GlcNAc...) asparagine glycan is attached at Asn457. 2 cysteine pairs are disulfide-bonded: Cys462–Cys517 and Cys562–Cys610. N-linked (GlcNAc...) asparagine glycosylation occurs at Asn644. The cysteines at positions 653 and 718 are disulfide-linked. 4 Fibronectin type-III domains span residues 736 to 844 (SPIA…TAPG), 849 to 961 (TIDN…SHGE), 963 to 1057 (KKVS…TKQH), and 1064 to 1168 (LIGK…LGSP). N-linked (GlcNAc...) asparagine glycans are attached at residues Asn895, Asn925, Asn945, Asn974, Asn979, Asn986, Asn1002, and Asn1092. Residues 1174 to 1194 (TTGSSDVPIPSLLLLLLLLLW) form a helical membrane-spanning segment. A lipid anchor (GPI-anchor amidated serine) is attached at Ser1177. The propeptide at 1178-1196 (SDVPIPSLLLLLLLLLWRL) is removed in mature form.

The protein belongs to the immunoglobulin superfamily. Contactin family. In terms of assembly, interacts with sax-7; the interaction establishes synaptic connections between neurons. As to expression, expressed in neurons including the I1 and I3 pharyngeal interneurons, NSM and VNC motor neurons, HSN and CAN neurons, the ALM and PLM touch receptor neurons and other unidentified head neurons. Expressed in AVG interneurons. Also expressed in somatic muscles, the excretory canal, the excretory cell and the hypodermis.

The protein resides in the cell membrane. The protein localises to the perikaryon. It localises to the cell projection. Its subcellular location is the axon. It is found in the synapse. The protein resides in the cytoplasm. Functionally, probable cell adhesion protein involved in patterning of the nervous system, playing a role in ALM and PLM touch receptor axon growth and VNC axon navigation. By associating with the transmembrane protein sax-7, mediates axonal interactions to establish synaptic connections between the AVG interneuron and the two PHC sensory neurons. Also required for non-neuronal cell migration in the excretory canal, regulating excretory canal elongation and excretory cell morphogenesis. Plays a role in regulating male mating behavior. This chain is Contactin rig-6, found in Caenorhabditis elegans.